A 301-amino-acid polypeptide reads, in one-letter code: Pyridoxal 5'-phosphate synthase subunit PdxS (301 aa).

Asp-31 contributes to the D-ribose 5-phosphate binding site. Residue Lys-88 is the Schiff-base intermediate with D-ribose 5-phosphate of the active site. Gly-160 provides a ligand contact to D-ribose 5-phosphate. Position 172 (Lys-172) interacts with D-glyceraldehyde 3-phosphate. D-ribose 5-phosphate-binding positions include Gly-221 and 242 to 243 (GS).

It belongs to the PdxS/SNZ family. In the presence of PdxT, forms a dodecamer of heterodimers.

It carries out the reaction aldehydo-D-ribose 5-phosphate + D-glyceraldehyde 3-phosphate + L-glutamine = pyridoxal 5'-phosphate + L-glutamate + phosphate + 3 H2O + H(+). It functions in the pathway cofactor biosynthesis; pyridoxal 5'-phosphate biosynthesis. Its function is as follows. Catalyzes the formation of pyridoxal 5'-phosphate from ribose 5-phosphate (RBP), glyceraldehyde 3-phosphate (G3P) and ammonia. The ammonia is provided by the PdxT subunit. Can also use ribulose 5-phosphate and dihydroxyacetone phosphate as substrates, resulting from enzyme-catalyzed isomerization of RBP and G3P, respectively. The polypeptide is Pyridoxal 5'-phosphate synthase subunit PdxS (Methanosarcina acetivorans (strain ATCC 35395 / DSM 2834 / JCM 12185 / C2A)).